A 319-amino-acid chain; its full sequence is MATH domain and coiled-coil domain-containing protein At3g58200 (319 aa).

The MATH domain occupies 6–132 (DNKFRWVIKN…NEEVKIVVEV (127 aa)). A coiled-coil region spans residues 255-302 (FKVDWLEKKLEEVKEKKKEEQIGETRMQEMKVFKQKCSDIEALMEREK).

The sequence is that of MATH domain and coiled-coil domain-containing protein At3g58200 from Arabidopsis thaliana (Mouse-ear cress).